The chain runs to 763 residues: Translation initiation factor IF-2 (763 aa).

The segment at 52 to 178 (KQKKVQTSQN…KDEAIKHETK (127 aa)) is disordered. The segment covering 65-82 (SNDENKKITNKNTEKTTE) has biased composition (basic and acidic residues). Residues 86–96 (TVDSNKQNNSN) show a composition bias toward polar residues. Composition is skewed to basic and acidic residues over residues 105-116 (RNNDEESVSHFD) and 123-135 (KSEM…LNDK). Over residues 136–145 (KKNKNFKNTK) the composition is skewed to basic residues. Positions 146–161 (NKNSNNNKNSKNNKNN) are enriched in low complexity. The segment covering 162–178 (KNNDHNRKDEAIKHETK) has biased composition (basic and acidic residues). The tr-type G domain maps to 265–434 (ERPPVITVMG…LMVAEMEELK (170 aa)). Positions 274–281 (GHVDHGKT) are G1. Position 274–281 (274–281 (GHVDHGKT)) interacts with GTP. Residues 299 to 303 (GITQH) are G2. The tract at residues 320–323 (DTPG) is G3. Residues 320-324 (DTPGH) and 374-377 (NKID) contribute to the GTP site. The tract at residues 374-377 (NKID) is G4. The interval 410-412 (SAR) is G5.

The protein belongs to the TRAFAC class translation factor GTPase superfamily. Classic translation factor GTPase family. IF-2 subfamily.

It is found in the cytoplasm. One of the essential components for the initiation of protein synthesis. Protects formylmethionyl-tRNA from spontaneous hydrolysis and promotes its binding to the 30S ribosomal subunits. Also involved in the hydrolysis of GTP during the formation of the 70S ribosomal complex. The chain is Translation initiation factor IF-2 from Finegoldia magna (strain ATCC 29328 / DSM 20472 / WAL 2508) (Peptostreptococcus magnus).